The primary structure comprises 118 residues: Large ribosomal subunit protein uL18 (118 aa).

The protein belongs to the universal ribosomal protein uL18 family. Part of the 50S ribosomal subunit; part of the 5S rRNA/L5/L18/L25 subcomplex. Contacts the 5S and 23S rRNAs.

In terms of biological role, this is one of the proteins that bind and probably mediate the attachment of the 5S RNA into the large ribosomal subunit, where it forms part of the central protuberance. In Ralstonia pickettii (strain 12J), this protein is Large ribosomal subunit protein uL18.